The chain runs to 448 residues: MVCIKSSCVVKPSEPTPNVKLFLPESDQVKPWTHAPVFFVYQPEVDNSVSTSLENLKFSLSRALVPYYPLAGRLNGIGGGRFELHCNTMGAVIIEAESDARLEDFGDFRPTSETTKLAPYVDYAKDVSELPLLLVQLTRFKCGGIGIGIAMSHIVSDGKGAFGFITTWAKINRGEKGIIEPFHDRTAFYKGDPTAKPRCDHVELKGYPVLLGNKSAKEERAKETTTRMLNLSKNQVDKLKEKSNLGKPKDYVGREYSRFEAMSGHIWRCASKARRHENEQLTSLRITIDCRNRLRPPLPPRYSGNATMVTTSIAESGELLSNPLGLGFVCSVIRKCIDKVDDDYIKSATDFLISQDDLTPYRSGFHNVGSTEGVFLGNPNLAITSWVGLPINDVDFGWGKPIYMGPTALGYDGKLLIIPGKDDGSVIVPIRLQVAHIDDFEKFFYEDI.

Catalysis depends on proton acceptor residues His-153 and Asp-395.

Belongs to the plant acyltransferase family. Highly expressed in root and rhizome. Expressed in senescent leaf and callus tissues. Expressed in detached leaf treated for 18 hours with ethephon, methyl jasmonate, salicylic acid or illuminated for 24 hours with UV light. Not expressed in mature leaf. Expressed at low levels in leaves and flowers.

The enzyme catalyses (2R,3S)-piscidate + (E)-4-coumaroyl-CoA = cimicifugate K + CoA. It catalyses the reaction (2R,3S)-piscidate + (E)-caffeoyl-CoA = cimicifugate D + CoA. The catalysed reaction is (2R,3S)-piscidate + (E)-sinapoyl-CoA = cimicifugate J + CoA. It carries out the reaction (2R,3S)-piscidate + (E)-feruloyl-CoA = cimicifugate E + CoA. Its pathway is phenylpropanoid metabolism. Functionally, catalyzes the formation of cimicifugic acids. Uses hydroxycinnamoyl-CoA thioesters as hydroxycinnamoyl donor substrates. Has a strict specificity for piscidic acid as an acceptor substrate as none of the various other acceptors tested including 4-hydroxyphenyllactic acid, malate, spermidine or tetrahydroxyhexanedioic acid are substrates. Donor substrates include 4-coumaroyl-CoA, caffeoyl-CoA, sinapoyl-CoA and feruloyl-CoA. No activity with cinnamoyl-CoA, isoferuloyl-CoA, 3,4-dimethoxycinnamoyl-CoA or 3,4-dihydroxybenzoyl-CoA as donors. In the reverse reaction with fukinolic acid and CoA as substrates, a formation of fukiic acid is evident. Hence, fukiic acid may also serve as an acceptor substrate. Involved in the biosynthesis of cimicifugic and possibly fukinolic acids. The sequence is that of Hydroxycinnamoyl-CoA:piscidic acid hydroxycinnamoyltransferase from Actaea racemosa (Black cohosh).